The sequence spans 213 residues: Peroxynitrite isomerase (213 aa).

Low complexity predominate over residues 1–10 (MGADATGDTA). Residues 1-26 (MGADATGDTAARGDRAAHGDTASGGA) are disordered. The GXWXGXG motif lies at 51 to 57 (GTWRGEG). Residue histidine 203 participates in heme b binding.

The protein belongs to the nitrobindin family. In terms of assembly, homodimer. Requires heme b as cofactor.

The catalysed reaction is peroxynitrite = nitrate. It functions in the pathway nitrogen metabolism. In terms of biological role, heme-binding protein able to scavenge peroxynitrite and to protect free L-tyrosine against peroxynitrite-mediated nitration, by acting as a peroxynitrite isomerase that converts peroxynitrite to nitrate. Therefore, this protein likely plays a role in peroxynitrite sensing and in the detoxification of reactive nitrogen and oxygen species (RNS and ROS, respectively). Is able to bind nitric oxide (NO) in vitro, but may act as a sensor of peroxynitrite levels in vivo. The chain is Peroxynitrite isomerase from Parafrankia sp. (strain EAN1pec).